We begin with the raw amino-acid sequence, 215 residues long: Protein slowmo (215 aa).

In terms of domain architecture, PRELI/MSF1 spans 1–170 (MKIWTSEHIF…VIGLINTEVK (170 aa)).

It belongs to the slowmo family. In terms of tissue distribution, expressed in specific tissues such as the developing central nervous system (CNS) and both the male and female germline. In the CNS, it is restricted in a subset of cells during embryogenesis and early larval development. In embryos, it is also expressed in salivary glands. In the testis, expressed in somatic cyst cells throughout the distal region where the mitotic cysts develop, extending through to meiotic cysts.

It localises to the mitochondrion. Its function is as follows. Required to regulate peristaltic movement and also for germline proliferation in males and females. This Drosophila melanogaster (Fruit fly) protein is Protein slowmo (slmo).